A 132-amino-acid chain; its full sequence is Fatty acid-binding protein, brain (132 aa).

Residue V2 is modified to N-acetylvaline. 127–129 (RCY) contacts a fatty acid.

Belongs to the calycin superfamily. Fatty-acid binding protein (FABP) family. In terms of tissue distribution, expressed in brain and other neural tissues.

Its subcellular location is the cytoplasm. B-FABP could be involved in the transport of a so far unknown hydrophobic ligand with potential morphogenic activity during CNS development. It is required for the establishment of the radial glial fiber system in developing brain, a system that is necessary for the migration of immature neurons to establish cortical layers. The protein is Fatty acid-binding protein, brain (Fabp7) of Mus musculus (Mouse).